The chain runs to 271 residues: Undecaprenyl-diphosphatase (271 aa).

The next 8 membrane-spanning stretches (helical) occupy residues 5-25 (LLIK…LPIS), 43-63 (FATM…VYYF), 80-100 (GFNL…IGIL), 109-129 (LFSP…MIVI), 145-165 (VSTS…FPGM), 186-206 (AEFS…FELV), 215-235 (LEWE…LIVV), and 246-266 (VLKP…FLIA).

The protein belongs to the UppP family.

It localises to the cell membrane. It catalyses the reaction di-trans,octa-cis-undecaprenyl diphosphate + H2O = di-trans,octa-cis-undecaprenyl phosphate + phosphate + H(+). Its function is as follows. Catalyzes the dephosphorylation of undecaprenyl diphosphate (UPP). Confers resistance to bacitracin. The sequence is that of Undecaprenyl-diphosphatase from Caldanaerobacter subterraneus subsp. tengcongensis (strain DSM 15242 / JCM 11007 / NBRC 100824 / MB4) (Thermoanaerobacter tengcongensis).